Reading from the N-terminus, the 383-residue chain is Outer membrane protein assembly factor BamB (383 aa).

A signal peptide spans M1–A23. Residue C24 is the site of N-palmitoyl cysteine attachment. C24 is lipidated: S-diacylglycerol cysteine.

It belongs to the BamB family. As to quaternary structure, part of the Bam complex.

The protein resides in the cell outer membrane. Functionally, part of the outer membrane protein assembly complex, which is involved in assembly and insertion of beta-barrel proteins into the outer membrane. This Alkalilimnicola ehrlichii (strain ATCC BAA-1101 / DSM 17681 / MLHE-1) protein is Outer membrane protein assembly factor BamB.